The following is a 293-amino-acid chain: 4-hydroxy-tetrahydrodipicolinate synthase (293 aa).

Residue Thr45 coordinates pyruvate. The active-site Proton donor/acceptor is the Tyr133. Lys161 acts as the Schiff-base intermediate with substrate in catalysis. Residue Ile203 coordinates pyruvate.

It belongs to the DapA family. As to quaternary structure, homotetramer; dimer of dimers.

Its subcellular location is the cytoplasm. The catalysed reaction is L-aspartate 4-semialdehyde + pyruvate = (2S,4S)-4-hydroxy-2,3,4,5-tetrahydrodipicolinate + H2O + H(+). Its pathway is amino-acid biosynthesis; L-lysine biosynthesis via DAP pathway; (S)-tetrahydrodipicolinate from L-aspartate: step 3/4. Functionally, catalyzes the condensation of (S)-aspartate-beta-semialdehyde [(S)-ASA] and pyruvate to 4-hydroxy-tetrahydrodipicolinate (HTPA). The protein is 4-hydroxy-tetrahydrodipicolinate synthase of Shewanella denitrificans (strain OS217 / ATCC BAA-1090 / DSM 15013).